Here is a 213-residue protein sequence, read N- to C-terminus: Cell division protein SepF 2 (213 aa).

Residues 16–63 (EDDGYDGRGFDPDDDFEPELDPEPERDRRRHEPPHQSHQALHPQRDES) are disordered. Residues 27-39 (PDDDFEPELDPEP) show a composition bias toward acidic residues.

It belongs to the SepF family. As to quaternary structure, homodimer. Interacts with FtsZ.

The protein localises to the cytoplasm. Cell division protein that is part of the divisome complex and is recruited early to the Z-ring. Probably stimulates Z-ring formation, perhaps through the cross-linking of FtsZ protofilaments. Its function overlaps with FtsA. This is Cell division protein SepF 2 from Streptomyces avermitilis (strain ATCC 31267 / DSM 46492 / JCM 5070 / NBRC 14893 / NCIMB 12804 / NRRL 8165 / MA-4680).